The primary structure comprises 599 residues: Elongation factor 4 (599 aa).

Residues 2–184 (KNIRNFSIIA…RLVRDIPPPQ (183 aa)) form the tr-type G domain. Residues 14–19 (DHGKST) and 131–134 (NKID) each bind GTP.

It belongs to the TRAFAC class translation factor GTPase superfamily. Classic translation factor GTPase family. LepA subfamily.

The protein resides in the cell inner membrane. It carries out the reaction GTP + H2O = GDP + phosphate + H(+). Its function is as follows. Required for accurate and efficient protein synthesis under certain stress conditions. May act as a fidelity factor of the translation reaction, by catalyzing a one-codon backward translocation of tRNAs on improperly translocated ribosomes. Back-translocation proceeds from a post-translocation (POST) complex to a pre-translocation (PRE) complex, thus giving elongation factor G a second chance to translocate the tRNAs correctly. Binds to ribosomes in a GTP-dependent manner. The protein is Elongation factor 4 of Salmonella gallinarum (strain 287/91 / NCTC 13346).